The primary structure comprises 674 residues: Death-associated protein kinase related (674 aa).

A Protein kinase domain is found at 37–295 (EVEQTPFARG…ATGCLDHIWL (259 aa)). ATP-binding positions include 43–51 (FARGKFAAV) and Lys-66. Asp-160 functions as the Proton acceptor in the catalytic mechanism. 4 disordered regions span residues 308 to 388 (QPQS…GGSI), 412 to 440 (TLTS…SDKE), 511 to 583 (DSSG…TSGS), and 614 to 650 (TSSA…HHHV). Residues 312 to 343 (DAEEEEEEDVDDDVEDEEEEEQVEEEEEETQN) are compositionally biased toward acidic residues. The span at 352–363 (PQQQQQPVQQHQ) shows a compositional bias: low complexity. Residues 373 to 382 (KPTHNGHHRA) are compositionally biased toward basic residues. Phosphoserine is present on residues Ser-384, Ser-387, Ser-435, Ser-437, and Ser-521. Residues 512 to 525 (SSGSAVARRSGGAV) are compositionally biased toward low complexity. Composition is skewed to polar residues over residues 526-541 (TSSS…SVRL) and 555-564 (YKKQTSQNGC). 2 stretches are compositionally biased toward low complexity: residues 565-583 (SSTS…TSGS) and 614-631 (TSSA…TSAA). Basic residues predominate over residues 632-650 (HHLHHHHMHHHHHHHHHHV).

The protein belongs to the protein kinase superfamily. Ser/Thr protein kinase family.

It carries out the reaction L-seryl-[protein] + ATP = O-phospho-L-seryl-[protein] + ADP + H(+). The catalysed reaction is L-threonyl-[protein] + ATP = O-phospho-L-threonyl-[protein] + ADP + H(+). The chain is Death-associated protein kinase related (Drak) from Drosophila melanogaster (Fruit fly).